A 216-amino-acid chain; its full sequence is ATP-dependent Clp protease proteolytic subunit (216 aa).

The Nucleophile role is filled by Ser120. His145 is an active-site residue.

Belongs to the peptidase S14 family. As to quaternary structure, fourteen ClpP subunits assemble into 2 heptameric rings which stack back to back to give a disk-like structure with a central cavity, resembling the structure of eukaryotic proteasomes.

It is found in the cytoplasm. The enzyme catalyses Hydrolysis of proteins to small peptides in the presence of ATP and magnesium. alpha-casein is the usual test substrate. In the absence of ATP, only oligopeptides shorter than five residues are hydrolyzed (such as succinyl-Leu-Tyr-|-NHMec, and Leu-Tyr-Leu-|-Tyr-Trp, in which cleavage of the -Tyr-|-Leu- and -Tyr-|-Trp bonds also occurs).. Cleaves peptides in various proteins in a process that requires ATP hydrolysis. Has a chymotrypsin-like activity. Plays a major role in the degradation of misfolded proteins. The polypeptide is ATP-dependent Clp protease proteolytic subunit (Cupriavidus pinatubonensis (strain JMP 134 / LMG 1197) (Cupriavidus necator (strain JMP 134))).